We begin with the raw amino-acid sequence, 333 residues long: MELIVKEESKTDYNYGSDPYNRDIKTLLNTGLVVIDKPSGPTSHEVAAWVRNMLNLVKAGHGGTLDPKVTGALPVALGNTTKCVPIWHIPPKEYVCLMHLHDDAKVEDIENIFKEFTGRIHQRPPLKAAVKRSLRIRKIYEIEILEIDGRDILFRTKCQSGTYLRKLVDDMGEALGTSAHMQELRRTISGPFYENEAVYLQDLLDAYIFWKEDGNEEELRKLVKPLEYGLQHLKKIIVKDSAVDAVCHGATLYSSGVSKIEKGIGTDEVVLIETLKGEAVAVGKPLMNTKDMLKTEEGEVVEITRVIMEPGIYPRIWKKRNKNDKTKAESKKK.

Residue aspartate 66 is the Nucleophile of the active site. Residues 233–308 enclose the PUA domain; that stretch reads LKKIIVKDSA…EVVEITRVIM (76 aa).

This sequence belongs to the pseudouridine synthase TruB family. Type 2 subfamily.

The enzyme catalyses uridine(55) in tRNA = pseudouridine(55) in tRNA. Its function is as follows. Could be responsible for synthesis of pseudouridine from uracil-55 in the psi GC loop of transfer RNAs. This Methanococcus maripaludis (strain C5 / ATCC BAA-1333) protein is Probable tRNA pseudouridine synthase B.